The primary structure comprises 426 residues: Serine--tRNA ligase (426 aa).

Residue 230 to 232 (TAE) participates in L-serine binding. An ATP-binding site is contributed by 261–263 (RSE). Residue Glu284 participates in L-serine binding. An ATP-binding site is contributed by 348-351 (EISS). Ser384 serves as a coordination point for L-serine.

Belongs to the class-II aminoacyl-tRNA synthetase family. Type-1 seryl-tRNA synthetase subfamily. As to quaternary structure, homodimer. The tRNA molecule binds across the dimer.

The protein resides in the cytoplasm. It carries out the reaction tRNA(Ser) + L-serine + ATP = L-seryl-tRNA(Ser) + AMP + diphosphate + H(+). It catalyses the reaction tRNA(Sec) + L-serine + ATP = L-seryl-tRNA(Sec) + AMP + diphosphate + H(+). The protein operates within aminoacyl-tRNA biosynthesis; selenocysteinyl-tRNA(Sec) biosynthesis; L-seryl-tRNA(Sec) from L-serine and tRNA(Sec): step 1/1. In terms of biological role, catalyzes the attachment of serine to tRNA(Ser). Is also able to aminoacylate tRNA(Sec) with serine, to form the misacylated tRNA L-seryl-tRNA(Sec), which will be further converted into selenocysteinyl-tRNA(Sec). The sequence is that of Serine--tRNA ligase from Erythrobacter litoralis (strain HTCC2594).